Here is a 500-residue protein sequence, read N- to C-terminus: Probable cation transporter HKT1;4 (500 aa).

Residues Met-1–Ala-12 lie on the Cytoplasmic side of the membrane. Helical transmembrane passes span Leu-13–Val-33 and Leu-74–Leu-94. Over Ala-95–Arg-156 the chain is Cytoplasmic. The interval Ala-121–Met-145 is disordered. The next 2 membrane-spanning stretches (helical) occupy residues Ala-157–Val-177 and Val-239–Ala-259. Over Ala-260–Cys-290 the chain is Cytoplasmic. Helical transmembrane passes span Trp-291 to Met-311 and Leu-346 to Tyr-366. Residues Thr-367–Leu-390 are Cytoplasmic-facing. The next 2 membrane-spanning stretches (helical) occupy residues Leu-391–Ile-411 and Gly-464–Gly-484. Topologically, residues Arg-485 to Ser-500 are cytoplasmic.

The protein belongs to the TrkH potassium transport family. HKT (TC 2.A.38.3) subfamily.

The protein localises to the membrane. Probable cation transporter. May be involved in regulation of potassium-sodium homeostasis. This Oryza sativa subsp. japonica (Rice) protein is Probable cation transporter HKT1;4.